A 356-amino-acid chain; its full sequence is tRNA N6-adenosine threonylcarbamoyltransferase (356 aa).

Residues His115 and His119 each contribute to the Fe cation site. Substrate is bound by residues 138-142 (LVSGG), Asp171, Gly184, and Asn283. Asp311 lines the Fe cation pocket.

The protein belongs to the KAE1 / TsaD family. Requires Fe(2+) as cofactor.

Its subcellular location is the cytoplasm. It carries out the reaction L-threonylcarbamoyladenylate + adenosine(37) in tRNA = N(6)-L-threonylcarbamoyladenosine(37) in tRNA + AMP + H(+). In terms of biological role, required for the formation of a threonylcarbamoyl group on adenosine at position 37 (t(6)A37) in tRNAs that read codons beginning with adenine. Is involved in the transfer of the threonylcarbamoyl moiety of threonylcarbamoyl-AMP (TC-AMP) to the N6 group of A37, together with TsaE and TsaB. TsaD likely plays a direct catalytic role in this reaction. This Prochlorococcus marinus (strain MIT 9313) protein is tRNA N6-adenosine threonylcarbamoyltransferase.